Reading from the N-terminus, the 442-residue chain is tRNA-2-methylthio-N(6)-dimethylallyladenosine synthase (442 aa).

The MTTase N-terminal domain maps to 2 to 120; that stretch reads KKVFIRTFGC…LPKMIVDKET (119 aa). [4Fe-4S] cluster contacts are provided by Cys11, Cys49, Cys83, Cys157, Cys161, and Cys164. Residues 143-375 form the Radical SAM core domain; the sequence is RVEGGAAFVS…NEVIEAETAR (233 aa). In terms of domain architecture, TRAM spans 378–441; the sequence is QTMIGTVQRC…TFSLRGKIVE (64 aa).

It belongs to the methylthiotransferase family. MiaB subfamily. Monomer. Requires [4Fe-4S] cluster as cofactor.

The protein localises to the cytoplasm. It carries out the reaction N(6)-dimethylallyladenosine(37) in tRNA + (sulfur carrier)-SH + AH2 + 2 S-adenosyl-L-methionine = 2-methylsulfanyl-N(6)-dimethylallyladenosine(37) in tRNA + (sulfur carrier)-H + 5'-deoxyadenosine + L-methionine + A + S-adenosyl-L-homocysteine + 2 H(+). Its function is as follows. Catalyzes the methylthiolation of N6-(dimethylallyl)adenosine (i(6)A), leading to the formation of 2-methylthio-N6-(dimethylallyl)adenosine (ms(2)i(6)A) at position 37 in tRNAs that read codons beginning with uridine. The polypeptide is tRNA-2-methylthio-N(6)-dimethylallyladenosine synthase (Neisseria meningitidis serogroup A / serotype 4A (strain DSM 15465 / Z2491)).